The sequence spans 188 residues: UPF0301 protein Smlt1098 (188 aa).

It belongs to the UPF0301 (AlgH) family.

This chain is UPF0301 protein Smlt1098, found in Stenotrophomonas maltophilia (strain K279a).